A 602-amino-acid polypeptide reads, in one-letter code: MSPPMSPMKPPKGFAPMSCCWSTETMQKWLPFLGWLPDYTWYALKMDFIAGISVGLTVIPQALAYAEVAGLPPQYGLYSAFMGCFVYFFLGTSRDVTLGPTAIMSLLVSFYTFHEPAYAVLLAFLTGCIQLGMGFLRLGLLLDFISCPVIKGFTSAAAIIIGFGQIKNLLGLQHIPRQFFLQVYYTFHNIGETRVGDAVLGLVCMVLLLVLKLMRDHVPPVHPEMPTGVRLSHGLVWTATTARNALVVSFAALVAYSFQVTGYQPFVLTGKTPEGLPDAHIPPFSVTTANGTISFTEMVQGMGAGLVVVPLMGLLESIAVAKSFASQNNYRINSNQELLALGFTNILGSLFSSYPVTGSFGRTAVNAQSGVCTPAGGLMTGALVLLSLDYLTSLFYYIPKSALAAVIIMAVVPLFDTKIVKTLWRVKRLDLLPLCVTFLLCFWEVQYGILAGTLVSVLILLHSVARPKIQVSEGPMLVLQPASGLHFPAIETLREALLSRALETSPPRSVALDCTHICSIDYTVVLGLGELLEDFHKRGATLALIGLQVPVLRVLLSADLKGVLYFCTLEEAEKYLKQEPGTQPYNGSEDSVPEHKIALLKA.

The Extracellular segment spans residues 1–47; sequence MSPPMSPMKPPKGFAPMSCCWSTETMQKWLPFLGWLPDYTWYALKMD. A helical transmembrane segment spans residues 48–68; sequence FIAGISVGLTVIPQALAYAEV. A topological domain (cytoplasmic) is located at residue A69. A helical transmembrane segment spans residues 70–90; sequence GLPPQYGLYSAFMGCFVYFFL. Over 91-115 the chain is Extracellular; sequence GTSRDVTLGPTAIMSLLVSFYTFHE. Residues 116-136 form a helical membrane-spanning segment; that stretch reads PAYAVLLAFLTGCIQLGMGFL. Over 137 to 143 the chain is Cytoplasmic; that stretch reads RLGLLLD. A helical transmembrane segment spans residues 144–164; the sequence is FISCPVIKGFTSAAAIIIGFG. The Extracellular segment spans residues 165 to 193; the sequence is QIKNLLGLQHIPRQFFLQVYYTFHNIGET. A helical transmembrane segment spans residues 194–214; the sequence is RVGDAVLGLVCMVLLLVLKLM. At 215–246 the chain is on the cytoplasmic side; sequence RDHVPPVHPEMPTGVRLSHGLVWTATTARNAL. A helical membrane pass occupies residues 247–267; the sequence is VVSFAALVAYSFQVTGYQPFV. The Extracellular segment spans residues 268–300; that stretch reads LTGKTPEGLPDAHIPPFSVTTANGTISFTEMVQ. The chain crosses the membrane as a helical span at residues 301–321; the sequence is GMGAGLVVVPLMGLLESIAVA. Residues 322-337 lie on the Cytoplasmic side of the membrane; sequence KSFASQNNYRINSNQE. Residues 338-358 form a helical membrane-spanning segment; the sequence is LLALGFTNILGSLFSSYPVTG. Topologically, residues 359 to 370 are extracellular; it reads SFGRTAVNAQSG. A helical membrane pass occupies residues 371–391; that stretch reads VCTPAGGLMTGALVLLSLDYL. The Cytoplasmic portion of the chain corresponds to 392–394; sequence TSL. Residues 395-415 traverse the membrane as a helical segment; it reads FYYIPKSALAAVIIMAVVPLF. At 416-438 the chain is on the extracellular side; that stretch reads DTKIVKTLWRVKRLDLLPLCVTF. The chain crosses the membrane as a helical span at residues 439-459; the sequence is LLCFWEVQYGILAGTLVSVLI. Topologically, residues 460-602 are cytoplasmic; it reads LLHSVARPKI…PEHKIALLKA (143 aa). The region spanning 466–580 is the STAS domain; it reads RPKIQVSEGP…EAEKYLKQEP (115 aa).

This sequence belongs to the SLC26A/SulP transporter (TC 2.A.53) family.

The protein localises to the cell membrane. The protein resides in the lysosome membrane. Its subcellular location is the apical cell membrane. It is found in the basolateral cell membrane. It catalyses the reaction hydrogencarbonate(in) + chloride(out) = hydrogencarbonate(out) + chloride(in). The enzyme catalyses sulfate(in) + H(+)(in) = sulfate(out) + H(+)(out). It carries out the reaction oxalate(in) + chloride(out) = oxalate(out) + chloride(in). Its function is as follows. Sodium-independent anion exchanger mediating bicarbonate, chloride, sulfate and oxalate transport. Exhibits sodium-independent sulfate anion transporter activity that may cooperate with SLC26A2 to mediate DIDS-sensitive sulfate uptake into high endothelial venules endothelial cells (HEVEC). In the kidney, mediates chloride-bicarbonate exchange, facilitating V-ATPase-mediated acid secretion. May function as a chloride channel, playing an important role in moderating chloride homeostasis and neuronal activity in the cerebellum. The chain is Sodium-independent sulfate anion transporter from Bos taurus (Bovine).